The following is a 330-amino-acid chain: Ribose operon repressor (330 aa).

An HTH lacI-type domain is found at 2–56; that stretch reads ATMKDVARLAGVSTSTVSHVINKDRFVSEAITAKVEAAIKELNYAPSALARSLKL. A DNA-binding region (H-T-H motif) is located at residues 4-23; the sequence is MKDVARLAGVSTSTVSHVIN.

Functionally, transcriptional repressor for the ribose rbsDACBK operon. RbsR binds to a region of perfect dyad symmetry spanning the rbs operon transcriptional start site. The affinity for the rbs operator is reduced by addition of ribose, consistent with ribose being the inducer of the operon. This is Ribose operon repressor (rbsR) from Escherichia coli O6:H1 (strain CFT073 / ATCC 700928 / UPEC).